Here is a 2005-residue protein sequence, read N- to C-terminus: MAAADGGGPGGASVGTEEDGGGVGHRTVYLFDRREKESELGDRPLQVGERSDYAGFRACVCQTLGISPEEKFVITTTSRKEITCDNFDETVKDGVTLYLLQSVNQLLLTATKERIDFLPHYDTLVKSGMYEYYASEGQNPLPFALAELIDNSLSATSRNIGVRRIQIKLLFDETQGKPAVAVIDNGRGMTSKQLNNWAVYRLSKFTRQGDFESDHSGYVRPVPVPRSLNSDISYFGVGGKQAVFFVGQSARMISKPADSQDVHELVLSKEDFEKKEKNKEAIYSGYIRNRKPSDSVHITNDDERFLHHLIIEEKEKDSFTAVVITGVQPEHIQYLKNYFHLWTRQLAHIYHYYIHGPKGNEIRTSKEVEPFNNIDIEISMFEKGKVPKIVNLREIQDDMQTLYVNTAADSFEFKAHVEGDGVVEGIIRYHPFLYDRETYPDDPCFPSKLKDEDDEDDCFILEKAARGKRPIFECFWNGRLIPYTSVEDFDWCTPPKKRGLAPIECYNRISGALFTNDKFQVSTNKLTFMDLELKLKDKNTLFTRILNGQEQRMKIDREFALWLKDCHEKYDKQIKFTLFKGVITRPDLPSKKQGPWATYAAIEWDGKIYKAGQLVKTIKTLPLFYGSIVRFFLYGDHDGEVYATGGEVQIAMEPQALYDEVRTVPIAKLDRTVAEKAVKKYVEDEMARLPDRLSVTWPEGDELLPNEVRPAGTPIGALRIEILNKKGEAMQKLPGTSHGGSKKLLVELKVILHSSSGNKEIISHISQHGGKWPYWFKKMENIQKLGNYTLKLQVVLNESNADTYAGRPLPSKAIKFSVKEGKPEKFSFGLLDLPFRVGVPFNIPLEFQDEFGHTSQLVTDIQPVLEASGLSLHYEEITKGPNCVIRGVTAKGPVNSCQGKNYNLKVTLPGLKEDSQILKIRLLPGHPRRLKVKPDSEILVIENGTAFPFQVEVLDESDNITAQPKLIVHCKFSGAPNLPVYVVDCSSSGTSILTGSAIQVQNIKKDQTLKARIEIPSCKDVAPVEKTIKLLPSSHVARLQIFSVEGQKAIQIKHQDEVNWIAGDIMHNLIFQMYDEGEREINITSALAEKIKVNWTPEINKEHLLQGLLPDVQVPTSVKDMRYCQVSFQDDHVSLESAFTVRPLPDEPKHLKCEMKGGKTVQMGQELQGEVVIIITDQYGNQIQAFSPSSLSSLSIAGVGLDSSNLKTTFQENTQSISVRGIKFIPGPPGNKDLCFTWREFSDFIRVQLISGPPAKLLLIDWPELKESIPVINGRDLQNPIIVQLCDQWDNPAPVQHVKISLTKASNLKLMPSNQQHKTDEKGRANLGVFSVFAPRGEHTLQVKAIYNKSIIEGPIIKLMILPDPEKPVRLNVKYDKDASFLAGGLFTDFMISVISEDDSIIKNINPARISMKMWKLSTSGNRPPANAETFSCNKIKDNDKEDGCFYFRDKVIPNKVGTYCIQFGFMMDKTNILNSEQVIVEVLPNQPVKLVPKIKPPTPAVSNVRSVASRTLVRDLHLSITDDYDNHTGIDLVGTIIATIKGSNEEDTDTPLFIGKVRTLEFPFVNGSAEIMSLVLAESSPGRDSTEYFIVFEPRLPLLSRTLEPYILPFMFYNDVKKQQQMAALTKEKDQLSQSIVMYKSLFEASQQLLNEMKCQVEEARLKEAQLRNELKIHNIDIPTTQQVPHIEALLKRKLSEQEELKKKPRRSCTLPNYTKGSGDVLGKIAHLAQIEDDRAAMVISWHLASDMDCVVTLTTDAARRIYDETQGRQQVLPLDSIYKKTLPDWKRSLPHFRNGKLYFKPIGDPVFARDLLTFPDNVEHCETVFGMLLGDTIILDNLDAANHYRKEVVKITHCPTLLTRDGDRIRSNGKFGGLQNKAPPMDKLRGMVFGAPVPKQCLILGEQIDLLQQYRSAVCKLDSVNKDLNSQLEYLRTPDMRKKKQELDEHEKNLKLIEEKLGMTPIRKCNDSLRHSPKVETTDCPVPPKRMRREATRQNRIITKTDV.

Positions 1–13 are enriched in gly residues; it reads MAAADGGGPGGAS. The interval 1–23 is disordered; that stretch reads MAAADGGGPGGASVGTEEDGGGV. The residue at position 2 (alanine 2) is an N-acetylalanine. The ATPase activity domain stretch occupies residues 111 to 702; it reads TKERIDFLPH…LSVTWPEGDE (592 aa). Lysine 1349 bears the N6-acetyllysine mark. Residues lysine 1374 and lysine 1496 each participate in a glycyl lysine isopeptide (Lys-Gly) (interchain with G-Cter in SUMO2) cross-link. Threonine 1499 carries the post-translational modification Phosphothreonine. The SMC hinge domain maps to 1720–1847; sequence GDVLGKIAHL…DNLDAANHYR (128 aa). The residue at position 1802 (lysine 1802) is an N6-succinyllysine. Serine 1974 is subject to Phosphoserine.

Belongs to the SMC family. Highly divergent. Homodimer; homodimerizes via its SMC hinge domain. Interacts with LRIF1. Sumoylated with SUMO1.

The protein localises to the chromosome. It carries out the reaction ATP + H2O = ADP + phosphate + H(+). Functionally, non-canonical member of the structural maintenance of chromosomes (SMC) protein family that plays a key role in epigenetic silencing by regulating chromatin architecture. Promotes heterochromatin formation in both autosomes and chromosome X, probably by mediating the merge of chromatin compartments. Plays a key role in chromosome X inactivation in females by promoting the spreading of heterochromatin. Recruited to inactivated chromosome X by Xist RNA and acts by mediating the merge of chromatin compartments: promotes random chromatin interactions that span the boundaries of existing structures, leading to create a compartment-less architecture typical of inactivated chromosome X. Required to facilitate Xist RNA spreading. Also required for silencing of a subset of clustered autosomal loci in somatic cells, such as the DUX4 locus. Has ATPase activity; may participate in structural manipulation of chromatin in an ATP-dependent manner as part of its role in gene expression regulation. Also plays a role in DNA repair: localizes to sites of DNA double-strand breaks in response to DNA damage to promote the repair of DNA double-strand breaks. Acts by promoting non-homologous end joining (NHEJ) and inhibiting homologous recombination (HR) repair. This is Structural maintenance of chromosomes flexible hinge domain-containing protein 1 from Homo sapiens (Human).